Here is a 382-residue protein sequence, read N- to C-terminus: MDQQKVNLLNYNYSQLRELLIAWDEKPFRAQQLFQWIHQVGIRDFAQMTNLGKVLRNKLSQLACIDLPEIVACQKSADGTHKWLLKLECGNCIETVFIPEANRGTLCVSSQVGCALNCSFCSTAKQGFNRNLSTAEIIGQVWLAARELSDNNGTHDKKITNVVMMGMGEPLLNFDNVVSAMNIMMDDLAYGLSKRRVTLSTSGVLPEMERLREVSPVALAVSLHAPTDELRNELVPINKKYPLSQLISLCKRYFKDEPRRKVTFEYVMLKGVNDQPEHASQLIKLLHNVPAKVNLIPFNPFPLTQYQRSSRETIDAFRDKLMKHGINTITRKTRGDDIDAACGQLAGEVKDKTSRSQRWQKLHFMSKTDKSTELTISSEEIA.

The active-site Proton acceptor is the Glu94. A Radical SAM core domain is found at 100–336; the sequence is EANRGTLCVS…NTITRKTRGD (237 aa). A disulfide bond links Cys107 and Cys342. [4Fe-4S] cluster contacts are provided by Cys114, Cys118, and Cys121. S-adenosyl-L-methionine-binding positions include 168–169, Ser200, 222–224, and Asn299; these read GE and SLH. Cys342 functions as the S-methylcysteine intermediate in the catalytic mechanism.

This sequence belongs to the radical SAM superfamily. RlmN family. It depends on [4Fe-4S] cluster as a cofactor.

The protein localises to the cytoplasm. It catalyses the reaction adenosine(2503) in 23S rRNA + 2 reduced [2Fe-2S]-[ferredoxin] + 2 S-adenosyl-L-methionine = 2-methyladenosine(2503) in 23S rRNA + 5'-deoxyadenosine + L-methionine + 2 oxidized [2Fe-2S]-[ferredoxin] + S-adenosyl-L-homocysteine. It carries out the reaction adenosine(37) in tRNA + 2 reduced [2Fe-2S]-[ferredoxin] + 2 S-adenosyl-L-methionine = 2-methyladenosine(37) in tRNA + 5'-deoxyadenosine + L-methionine + 2 oxidized [2Fe-2S]-[ferredoxin] + S-adenosyl-L-homocysteine. Functionally, specifically methylates position 2 of adenine 2503 in 23S rRNA and position 2 of adenine 37 in tRNAs. m2A2503 modification seems to play a crucial role in the proofreading step occurring at the peptidyl transferase center and thus would serve to optimize ribosomal fidelity. In Legionella pneumophila subsp. pneumophila (strain Philadelphia 1 / ATCC 33152 / DSM 7513), this protein is Dual-specificity RNA methyltransferase RlmN.